Consider the following 391-residue polypeptide: Elongation factor Tu (391 aa).

The tr-type G domain maps to 10 to 201 (KPHVNIGTIG…AVDSYIPTPE (192 aa)). Positions 19-26 (GHVDHGKT) are G1. 19-26 (GHVDHGKT) serves as a coordination point for GTP. Thr-26 is a binding site for Mg(2+). The G2 stretch occupies residues 55–59 (GITIS). The tract at residues 76–79 (DCPG) is G3. GTP contacts are provided by residues 76 to 80 (DCPGH) and 131 to 134 (NKCD). The G4 stretch occupies residues 131–134 (NKCD). Residues 169–171 (SAL) form a G5 region.

It belongs to the TRAFAC class translation factor GTPase superfamily. Classic translation factor GTPase family. EF-Tu/EF-1A subfamily. As to quaternary structure, monomer.

Its subcellular location is the cytoplasm. It carries out the reaction GTP + H2O = GDP + phosphate + H(+). In terms of biological role, GTP hydrolase that promotes the GTP-dependent binding of aminoacyl-tRNA to the A-site of ribosomes during protein biosynthesis. The polypeptide is Elongation factor Tu (Brucella canis (strain ATCC 23365 / NCTC 10854 / RM-666)).